A 272-amino-acid polypeptide reads, in one-letter code: Bis(5'-nucleosyl)-tetraphosphatase, symmetrical (272 aa).

This sequence belongs to the Ap4A hydrolase family.

It catalyses the reaction P(1),P(4)-bis(5'-adenosyl) tetraphosphate + H2O = 2 ADP + 2 H(+). Hydrolyzes diadenosine 5',5'''-P1,P4-tetraphosphate to yield ADP. In Chromohalobacter salexigens (strain ATCC BAA-138 / DSM 3043 / CIP 106854 / NCIMB 13768 / 1H11), this protein is Bis(5'-nucleosyl)-tetraphosphatase, symmetrical.